Here is a 63-residue protein sequence, read N- to C-terminus: ATP synthase subunit epsilon, mitochondrial (63 aa).

In terms of assembly, F-type ATP synthases have 2 components, the catalytic core F(1) and the membrane-embedded component F(0), linked together by a central stalk and a peripheral stalk. The central stalk, also called rotor shaft, is often seen as part of F(1). The peripheral stalk is seen as part of F(0). F(0) contains the membrane channel next to the rotor. F-type ATP synthases form dimers but each monomer functions independently in ATP generation. The dimer consists of 18 different polypeptides: ATP1 (subunit alpha, part of F(1), 3 molecules per monomer), ATP2 (subunit beta, part of F(1), 3 molecules per monomer), ATP3 (subunit gamma, part of the central stalk), ATP4 (subunit b, part of the peripheral stalk), ATP5/OSCP (subunit 5/OSCP, part of the peripheral stalk), ATP6 (subunit a, part of the peripheral stalk), ATP7 (subunit d, part of the peripheral stalk), ATP8 (subunit 8, part of the peripheral stalk), OLI1 (subunit c, part of the rotor, 10 molecules per monomer), ATP14 (subunit h, part of the peripheral stalk), ATP15 (subunit epsilon, part of the central stalk), ATP16 (subunit delta, part of the central stalk), ATP17 (subunit f, part of the peripheral stalk), ATP18 (subunit i/j, part of the peripheral stalk). Dimer-specific subunits are ATP19 (subunit k, at interface between monomers), ATP20 (subunit g, at interface between monomers), TIM11 (subunit e, at interface between monomers). Also contains subunit L.

The protein resides in the mitochondrion inner membrane. Its function is as follows. Mitochondrial membrane ATP synthase (F(1)F(0) ATP synthase or Complex V) produces ATP from ADP in the presence of a proton gradient across the membrane which is generated by electron transport complexes of the respiratory chain. F-type ATP synthases consist of two structural domains, F(1) - containing the extramembraneous catalytic core, and F(0) - containing the membrane proton channel, linked together by a central stalk and a peripheral stalk. During catalysis, ATP synthesis in the catalytic domain of F(1) is coupled via a rotary mechanism of the central stalk subunits to proton translocation. Part of the complex F(1) domain and the central stalk which is part of the complex rotary element. Rotation of the central stalk against the surrounding alpha/ATP1(3)beta/ATP2(3) subunits leads to hydrolysis of ATP in three separate catalytic sites on the beta/ATP2 subunits. The chain is ATP synthase subunit epsilon, mitochondrial from Pichia angusta (Yeast).